The following is a 185-amino-acid chain: Elongation factor P (185 aa).

This sequence belongs to the elongation factor P family.

The protein resides in the cytoplasm. It participates in protein biosynthesis; polypeptide chain elongation. Functionally, involved in peptide bond synthesis. Stimulates efficient translation and peptide-bond synthesis on native or reconstituted 70S ribosomes in vitro. Probably functions indirectly by altering the affinity of the ribosome for aminoacyl-tRNA, thus increasing their reactivity as acceptors for peptidyl transferase. The chain is Elongation factor P from Clostridium botulinum (strain Alaska E43 / Type E3).